Consider the following 661-residue polypeptide: Bifunctional polymyxin resistance protein ArnA (661 aa).

Residues 1–304 (MKAVVFAYHD…ALGLVSGAVI (304 aa)) are formyltransferase ArnAFT. Residue H104 is the Proton donor; for formyltransferase activity of the active site. (6R)-10-formyltetrahydrofolate contacts are provided by residues R114 and 136–140 (VNRAD). The tract at residues 314-661 (RRTRVLILGV…TVELVDDKNP (348 aa)) is dehydrogenase ArnADH. NAD(+) is bound by residues D347 and 368–369 (DI). UDP-alpha-D-glucuronate is bound by residues A393, Y398, and 432 to 433 (TS). E434 functions as the Proton acceptor; for decarboxylase activity in the catalytic mechanism. Residues R460, N492, 526-535 (KLIEGGKQKR), and Y613 contribute to the UDP-alpha-D-glucuronate site. The active-site Proton donor; for decarboxylase activity is the R619.

It in the N-terminal section; belongs to the Fmt family. UDP-L-Ara4N formyltransferase subfamily. This sequence in the C-terminal section; belongs to the NAD(P)-dependent epimerase/dehydratase family. UDP-glucuronic acid decarboxylase subfamily. Homohexamer, formed by a dimer of trimers.

The enzyme catalyses UDP-alpha-D-glucuronate + NAD(+) = UDP-beta-L-threo-pentopyranos-4-ulose + CO2 + NADH. It catalyses the reaction UDP-4-amino-4-deoxy-beta-L-arabinose + (6R)-10-formyltetrahydrofolate = UDP-4-deoxy-4-formamido-beta-L-arabinose + (6S)-5,6,7,8-tetrahydrofolate + H(+). It participates in nucleotide-sugar biosynthesis; UDP-4-deoxy-4-formamido-beta-L-arabinose biosynthesis; UDP-4-deoxy-4-formamido-beta-L-arabinose from UDP-alpha-D-glucuronate: step 1/3. The protein operates within nucleotide-sugar biosynthesis; UDP-4-deoxy-4-formamido-beta-L-arabinose biosynthesis; UDP-4-deoxy-4-formamido-beta-L-arabinose from UDP-alpha-D-glucuronate: step 3/3. Its pathway is bacterial outer membrane biogenesis; lipopolysaccharide biosynthesis. Its function is as follows. Bifunctional enzyme that catalyzes the oxidative decarboxylation of UDP-glucuronic acid (UDP-GlcUA) to UDP-4-keto-arabinose (UDP-Ara4O) and the addition of a formyl group to UDP-4-amino-4-deoxy-L-arabinose (UDP-L-Ara4N) to form UDP-L-4-formamido-arabinose (UDP-L-Ara4FN). The modified arabinose is attached to lipid A and is required for resistance to polymyxin and cationic antimicrobial peptides. The polypeptide is Bifunctional polymyxin resistance protein ArnA (Klebsiella pneumoniae subsp. pneumoniae (strain ATCC 700721 / MGH 78578)).